The primary structure comprises 238 residues: Ribonuclease PH (238 aa).

Phosphate-binding positions include R86 and 124 to 126 (GTR).

Belongs to the RNase PH family. In terms of assembly, homohexameric ring arranged as a trimer of dimers.

The catalysed reaction is tRNA(n+1) + phosphate = tRNA(n) + a ribonucleoside 5'-diphosphate. In terms of biological role, phosphorolytic 3'-5' exoribonuclease that plays an important role in tRNA 3'-end maturation. Removes nucleotide residues following the 3'-CCA terminus of tRNAs; can also add nucleotides to the ends of RNA molecules by using nucleoside diphosphates as substrates, but this may not be physiologically important. Probably plays a role in initiation of 16S rRNA degradation (leading to ribosome degradation) during starvation. This is Ribonuclease PH from Haemophilus influenzae (strain PittEE).